The chain runs to 675 residues: TOM1-like protein 9 (675 aa).

The VHS domain maps to 9-138 (ATSEMLIGPD…ELLRAGAVFP (130 aa)). Disordered regions lie at residues 144–181 (SAPV…EPEF), 270–322 (LPGT…QLAL), 371–524 (FSDN…YAQM), 542–561 (QNGV…GYQP), and 622–675 (RDQT…AGTM). Positions 180–268 (EFPTLSLSEI…VLTNYEAIAS (89 aa)) constitute a GAT domain. 2 stretches are compositionally biased toward polar residues: residues 299-317 (GDSS…NGVL) and 372-435 (SDNT…GQGV). Residues 436–451 (SSPWSSQPAQQPVQPS) are compositionally biased toward low complexity. 2 stretches are compositionally biased toward polar residues: residues 470-481 (QDYSPSAESGSP) and 488-524 (PTQT…YAQM). Residues 646–661 (NKPEDKLFGDLVDISK) show a composition bias toward basic and acidic residues.

Belongs to the TOM1 family. As to quaternary structure, interacts with ELC/VPS23A and ELCL/VPS23B. As to expression, ubiquitously expressed.

The protein resides in the cytoplasm. It localises to the membrane. Its function is as follows. Might contribute to the loading of the ESCRT machinery. This is TOM1-like protein 9 from Arabidopsis thaliana (Mouse-ear cress).